We begin with the raw amino-acid sequence, 217 residues long: NADPH-dependent 3-demethoxyubiquinone 3-hydroxylase, mitochondrial (217 aa).

2 repeat units span residues 48–129 (AVDQ…TALL) and 130–217 (GKEG…SERF). The interval 48 to 217 (AVDQIIRVDH…SAAIYLSERF (170 aa)) is 2 X approximate tandem repeats. Fe cation is bound by residues glutamate 60, glutamate 90, histidine 93, glutamate 142, glutamate 178, and histidine 181. NADH is bound by residues tyrosine 212 and arginine 216.

It belongs to the COQ7 family. Component of a multi-subunit COQ enzyme complex. Interacts with COQ8B and COQ6. Interacts with COQ9. It depends on Fe cation as a cofactor.

Its subcellular location is the mitochondrion inner membrane. It catalyses the reaction a 5-methoxy-2-methyl-3-(all-trans-polyprenyl)benzoquinone + NADH + O2 = a 3-demethylubiquinone + NAD(+) + H2O. It functions in the pathway cofactor biosynthesis; ubiquinone biosynthesis. Catalyzes the hydroxylation of the 5-methoxy-2-methyl-3-(all-trans-polyprenyl)benzoquinone at the C6 position and participates in the biosynthesis of ubiquinone. Catalyzes the reaction through a substrate-mediated reduction pathway, whereby NADH shuttles electrons to 5-methoxy-2-methyl-3-(all-trans-decaprenyl)benzoquinone, which then transfers the electrons to the two Fe(3+) centers. The binding of 5-methoxy-2-methyl-3-(all-trans-polyprenyl)benzoquinone (DMQn) mediates reduction of the diiron center by nicotinamide adenine dinucleotide (NADH) and initiates oxygen activation for subsequent DMQ hydroxylation. The physiological substrates are 5-methoxy-2-methyl-3-(all-trans-nonaprenyl)benzoquinone (DMQ(9)) and 5-methoxy-2-methyl-3-(all-trans-decaprenyl)benzoquinone (DMQ(10)), however in vitro the enzyme does not have any specificity concerning the length of the polyprenyl tail, and accepts tails of various lengths with similar efficiency. Also has a structural role in the COQ enzyme complex, stabilizing other COQ polypeptides. Involved in lifespan determination in a ubiquinone-independent manner. Plays a role in modulating mitochondrial stress responses, acting in the nucleus, perhaps via regulating gene expression, independent of its characterized mitochondrial function in ubiquinone biosynthesis. This is NADPH-dependent 3-demethoxyubiquinone 3-hydroxylase, mitochondrial from Rattus norvegicus (Rat).